The chain runs to 270 residues: Phosphate import ATP-binding protein PstB 1 (270 aa).

In terms of domain architecture, ABC transporter spans 24–265; the sequence is LAVERLNLFY…PYQRQTEDYI (242 aa). Residue 56–63 participates in ATP binding; the sequence is GPSGCGKS.

Belongs to the ABC transporter superfamily. Phosphate importer (TC 3.A.1.7) family. The complex is composed of two ATP-binding proteins (PstB), two transmembrane proteins (PstC and PstA) and a solute-binding protein (PstS).

It is found in the cell inner membrane. It carries out the reaction phosphate(out) + ATP + H2O = ADP + 2 phosphate(in) + H(+). Part of the ABC transporter complex PstSACB involved in phosphate import. Responsible for energy coupling to the transport system. This Yersinia pestis bv. Antiqua (strain Antiqua) protein is Phosphate import ATP-binding protein PstB 1.